A 246-amino-acid polypeptide reads, in one-letter code: tRNA (guanine-N(1)-)-methyltransferase (246 aa).

Residues glycine 113 and 132–137 each bind S-adenosyl-L-methionine; that span reads LGDYVL.

It belongs to the RNA methyltransferase TrmD family. In terms of assembly, homodimer.

It localises to the cytoplasm. It catalyses the reaction guanosine(37) in tRNA + S-adenosyl-L-methionine = N(1)-methylguanosine(37) in tRNA + S-adenosyl-L-homocysteine + H(+). Specifically methylates guanosine-37 in various tRNAs. This is tRNA (guanine-N(1)-)-methyltransferase from Lactiplantibacillus plantarum (strain ATCC BAA-793 / NCIMB 8826 / WCFS1) (Lactobacillus plantarum).